The chain runs to 239 residues: Pathogenesis-related protein 5 (239 aa).

An N-terminal signal peptide occupies residues 1 to 23; it reads MANISSIHILFLVFITSGIAVMA. Cystine bridges form between Cys32-Cys238, Cys79-Cys89, Cys94-Cys99, Cys146-Cys228, Cys151-Cys211, Cys159-Cys174, Cys178-Cys187, and Cys188-Cys198.

The protein belongs to the thaumatin family.

The protein resides in the secreted. It is found in the extracellular space. The protein localises to the apoplast. In terms of biological role, partially responsible for acquired pathogen resistance. This chain is Pathogenesis-related protein 5, found in Arabidopsis thaliana (Mouse-ear cress).